We begin with the raw amino-acid sequence, 653 residues long: Aspartate--tRNA ligase, mitochondrial (653 aa).

A mitochondrion-targeting transit peptide spans Met1 to Phe46. Thr218 bears the Phosphothreonine mark. A Phosphoserine modification is found at Ser241. The tract at residues Gln243–Lys246 is aspartate. Position 265 (Arg265) interacts with L-aspartate. ATP is bound by residues Arg265–Glu267 and Glu534. Residue Arg541 participates in L-aspartate binding. Residue Gly583 to Arg586 participates in ATP binding.

Belongs to the class-II aminoacyl-tRNA synthetase family. Type 1 subfamily. As to quaternary structure, homodimer.

It localises to the mitochondrion matrix. Its subcellular location is the mitochondrion membrane. The enzyme catalyses tRNA(Asp) + L-aspartate + ATP = L-aspartyl-tRNA(Asp) + AMP + diphosphate. Catalyzes the attachment of aspartate to tRNA(Asp) in a two-step reaction: aspartate is first activated by ATP to form Asp-AMP and then transferred to the acceptor end of tRNA(Asp). The chain is Aspartate--tRNA ligase, mitochondrial (Dars2) from Mus musculus (Mouse).